Reading from the N-terminus, the 85-residue chain is MAQKKGGGSTRNGRDSKPKMLGVKAFGGELITAGSIIVRQRGTKFHPGDNVGVGKDHTLYALVDGHVSFAVKGALSKHTVNVTAA.

Positions 1–10 (MAQKKGGGST) are enriched in gly residues. The disordered stretch occupies residues 1–20 (MAQKKGGGSTRNGRDSKPKM).

Belongs to the bacterial ribosomal protein bL27 family.

In Delftia acidovorans (strain DSM 14801 / SPH-1), this protein is Large ribosomal subunit protein bL27.